A 328-amino-acid polypeptide reads, in one-letter code: Dolichyl-diphosphooligosaccharide--protein glycosyltransferase subunit MAGT1 (328 aa).

An N-terminal signal peptide occupies residues 1–22 (MLHKLLIVVFLVVCLHDMRLNG). The Extracellular segment spans residues 23–177 (QKKKETLLSE…DVHIRVIRPP (155 aa)). The 129-residue stretch at 40–168 (WVSKRAVVRL…LARWVADRTD (129 aa)) folds into the Thioredoxin domain. A glycan (N-linked (GlcNAc...) asparagine) is linked at Asn-64. Cysteines 80 and 83 form a disulfide. The chain crosses the membrane as a helical span at residues 178–198 (NYAGPLMLGLLLAFIGSLAYL). The Cytoplasmic segment spans residues 199–202 (RRNN). A helical transmembrane segment spans residues 203–223 (LEFLFNKNVWAFSALCFVLIM). Topologically, residues 224 to 257 (TSGQMWNHIRGPPYAHKNPNTGQVSYIHGSSQAQ) are extracellular. The chain crosses the membrane as a helical span at residues 258–278 (FVAETHIVLLFNAAVTIGMVL). Residues 279-293 (LHEAATSGLDIVKRK) lie on the Cytoplasmic side of the membrane. Residues 294-314 (IMCVAGIGLVVLFFSWLLSVF) traverse the membrane as a helical segment. Residues 315–328 (RAKYHGYPYSFLFG) lie on the Extracellular side of the membrane.

It belongs to the OST3/OST6 family. As to quaternary structure, accessory component of the STT3B-containing form of the oligosaccharyltransferase (OST) complex.

It localises to the cell membrane. The protein resides in the endoplasmic reticulum. It is found in the endoplasmic reticulum membrane. The protein operates within protein modification; protein glycosylation. Accessory component of the STT3B-containing form of the N-oligosaccharyl transferase (OST) complex which catalyzes the transfer of a high mannose oligosaccharide from a lipid-linked oligosaccharide donor to an asparagine residue within an Asn-X-Ser/Thr consensus motif in nascent polypeptide chains. Involved in N-glycosylation of STT3B-dependent substrates. Specifically required for the glycosylation of a subset of acceptor sites that are near cysteine residues; in this function seems to act redundantly with TUSC3. In its oxidized form proposed to form transient mixed disulfides with a glycoprotein substrate to facilitate access of STT3B to the unmodified acceptor site. Also has oxidoreductase-independent functions in the STT3B-containing OST complex possibly involving substrate recognition. Could indirectly play a role in Mg(2+) transport. The sequence is that of Dolichyl-diphosphooligosaccharide--protein glycosyltransferase subunit MAGT1 from Danio rerio (Zebrafish).